Here is a 379-residue protein sequence, read N- to C-terminus: uncharacterized protein (379 aa).

29–36 (GPLNSGKT) contacts ATP.

It belongs to the archaeal ATPase family.

This is an uncharacterized protein from Methanocaldococcus jannaschii (strain ATCC 43067 / DSM 2661 / JAL-1 / JCM 10045 / NBRC 100440) (Methanococcus jannaschii).